The sequence spans 422 residues: UDP-N-acetylglucosamine 1-carboxyvinyltransferase (422 aa).

22–23 (KN) is a phosphoenolpyruvate binding site. Residue R92 coordinates UDP-N-acetyl-alpha-D-glucosamine. C116 (proton donor) is an active-site residue. C116 is modified (2-(S-cysteinyl)pyruvic acid O-phosphothioketal). Residues 121–125 (RPVDQ), D305, and I327 each bind UDP-N-acetyl-alpha-D-glucosamine.

Belongs to the EPSP synthase family. MurA subfamily.

It localises to the cytoplasm. It carries out the reaction phosphoenolpyruvate + UDP-N-acetyl-alpha-D-glucosamine = UDP-N-acetyl-3-O-(1-carboxyvinyl)-alpha-D-glucosamine + phosphate. Its pathway is cell wall biogenesis; peptidoglycan biosynthesis. Cell wall formation. Adds enolpyruvyl to UDP-N-acetylglucosamine. This chain is UDP-N-acetylglucosamine 1-carboxyvinyltransferase, found in Sorangium cellulosum (strain So ce56) (Polyangium cellulosum (strain So ce56)).